The chain runs to 602 residues: Aspartate--tRNA(Asp/Asn) ligase (602 aa).

An L-aspartate-binding site is contributed by Glu-176. The interval 200-203 (QQFK) is aspartate. The L-aspartate site is built by Arg-222 and His-452. Position 222-224 (222-224 (RDE)) interacts with ATP. Glu-490 serves as a coordination point for ATP. Arg-497 is a binding site for L-aspartate. 542 to 545 (GIDR) contacts ATP.

Belongs to the class-II aminoacyl-tRNA synthetase family. Type 1 subfamily. Homodimer.

It localises to the cytoplasm. The catalysed reaction is tRNA(Asx) + L-aspartate + ATP = L-aspartyl-tRNA(Asx) + AMP + diphosphate. Its function is as follows. Aspartyl-tRNA synthetase with relaxed tRNA specificity since it is able to aspartylate not only its cognate tRNA(Asp) but also tRNA(Asn). Reaction proceeds in two steps: L-aspartate is first activated by ATP to form Asp-AMP and then transferred to the acceptor end of tRNA(Asp/Asn). In Rickettsia conorii (strain ATCC VR-613 / Malish 7), this protein is Aspartate--tRNA(Asp/Asn) ligase.